The chain runs to 275 residues: Lectin (275 aa).

A signal peptide spans Met-1–Ser-30. Asp-111 and Gly-129 together coordinate D-glucose. Mn(2+) contacts are provided by Glu-149 and Asp-151. Asp-151, Phe-153, Asn-155, and Asp-159 together coordinate Ca(2+). Mn(2+) is bound by residues Asp-159 and His-166. Residues Asn-211 to Asn-217 constitute a propeptide that is removed on maturation. Gly-246 and Ala-247 together coordinate D-glucose. Residues Lys-270 to Ala-275 constitute a propeptide that is removed on maturation.

This sequence belongs to the leguminous lectin family. As to quaternary structure, heterotetramer of two alpha and two beta chains. The mature form consists of two chains, alpha and beta, produced by cleavage of the immature protein. These remain cleaved, yet fold together to form one subunit.

In terms of biological role, D-mannose specific lectin. This Lens culinaris subsp. orientalis (Oriental wild lentil) protein is Lectin.